The primary structure comprises 582 residues: SHC-transforming protein 2 (582 aa).

2 disordered regions span residues 1–24 (MTQG…APTT) and 47–70 (GPAA…AGPG). The segment covering 8 to 20 (RAPPAPPAPPEPE) has biased composition (pro residues). The PID domain occupies 147–329 (LGPGVSYVVR…AGPEESAWGD (183 aa)). Residues 330–486 (EEDSLEHNYY…PTEEQLRQEP (157 aa)) are CH1. Residues tyrosine 338, tyrosine 339, and tyrosine 414 each carry the phosphotyrosine modification. The interval 460-481 (PLEDQWPSPPTRRAPVAPTEEQ) is disordered. An SH2 domain is found at 487 to 578 (WYHGRMSRRA…ESELHLRGVV (92 aa)).

Interacts with the Trk receptors in a phosphotyrosine-dependent manner and MEGF12. Once activated, binds to GRB2. Post-translationally, phosphorylated on tyrosines by the Trk receptors. As to expression, expressed in brain. Expressed at high level in the hypothalamus and at low level in the caudate nucleus.

Signaling adapter that couples activated growth factor receptors to signaling pathway in neurons. Involved in the signal transduction pathways of neurotrophin-activated Trk receptors in cortical neurons. This Homo sapiens (Human) protein is SHC-transforming protein 2 (SHC2).